A 282-amino-acid chain; its full sequence is 2-dehydro-3-deoxyphosphooctonate aldolase (282 aa).

This sequence belongs to the KdsA family.

The protein resides in the cytoplasm. It carries out the reaction D-arabinose 5-phosphate + phosphoenolpyruvate + H2O = 3-deoxy-alpha-D-manno-2-octulosonate-8-phosphate + phosphate. It participates in carbohydrate biosynthesis; 3-deoxy-D-manno-octulosonate biosynthesis; 3-deoxy-D-manno-octulosonate from D-ribulose 5-phosphate: step 2/3. The protein operates within bacterial outer membrane biogenesis; lipopolysaccharide biosynthesis. The protein is 2-dehydro-3-deoxyphosphooctonate aldolase of Bordetella avium (strain 197N).